Consider the following 276-residue polypeptide: Putative metal-binding protein TC_0696 (276 aa).

An N-terminal signal peptide occupies residues 1–18 (MRLLILLLFSFGIIYSHG). 4 residues coordinate a divalent metal cation: histidine 59, histidine 121, histidine 185, and aspartate 256.

The protein belongs to the bacterial solute-binding protein 9 family.

It localises to the periplasm. In terms of biological role, part of an ATP-binding cassette (ABC) transport system involved in metal import. Binds a metal with high affinity and specificity and delivers it to the membrane permease for translocation into the cytoplasm. This chain is Putative metal-binding protein TC_0696, found in Chlamydia muridarum (strain MoPn / Nigg).